Reading from the N-terminus, the 94-residue chain is Protein FAM24B (94 aa).

The signal sequence occupies residues Met-1–Cys-21.

Belongs to the FAM24 family.

The protein resides in the secreted. The protein is Protein FAM24B (FAM24B) of Homo sapiens (Human).